We begin with the raw amino-acid sequence, 426 residues long: MSILGIVVEYNPFHNGHLFHLKKAKELINPDLTIAVMSGNFVQRGEPAIMDNYSRAEIALKAGIDIVVQLPVVYSVQDAGGFALGSVWTLSLLGVTDIVFGSETGNMKLLDVLSDILIEEPTVYVKLLKQHLKTGLSFPNARKAALKDYLKLHLSDFAESIQEIERSNNILGLEYLRAIKQIRSDITPHSIVRTGADYNDPYFKGRFSSATAIRKLIITGQWEKVKQAVPDYSYAIIKRECALKKCPVHLEKMGRFILGLLRRLDREDFKNYYGFTEGLDARFVRCSRQCGEISEFLECVKAKRFTFTRLKRLLMNVILKLSPKLIEQSNKQGPQYIRVLGFNENGRSHLSRIKKKLKVPLLTTPSTWKRVMYKAISGDFEIDQDLFQLQMKRDIMAADIYSLFFDDVKVIKASNEMKRRIIYIRG.

ATP-binding positions include Val7 to His20, Gly101, Asn168, and Arg193.

It belongs to the TmcAL family.

It is found in the cytoplasm. The catalysed reaction is cytidine(34) in elongator tRNA(Met) + acetate + ATP = N(4)-acetylcytidine(34) in elongator tRNA(Met) + AMP + diphosphate. In terms of biological role, catalyzes the formation of N(4)-acetylcytidine (ac(4)C) at the wobble position of elongator tRNA(Met), using acetate and ATP as substrates. First activates an acetate ion to form acetyladenylate (Ac-AMP) and then transfers the acetyl group to tRNA to form ac(4)C34. In Kosmotoga olearia (strain ATCC BAA-1733 / DSM 21960 / TBF 19.5.1), this protein is tRNA(Met) cytidine acetate ligase.